Reading from the N-terminus, the 218-residue chain is Adenylate kinase (218 aa).

Residue 10 to 15 participates in ATP binding; that stretch reads GAGKGT. Residues 30–59 form an NMP region; the sequence is STGDMLRAAVKAGTPLGLEAKKVMDAGGLV. AMP is bound by residues threonine 31, arginine 36, 57-59, 85-88, and glutamine 92; these read GLV and GFPR. The interval 122 to 159 is LID; sequence GRRVHPASGRSYHVRFNPPKAEGVDDVTGEPLVQRDDD. ATP contacts are provided by residues arginine 123 and 132 to 133; that span reads SY. AMP contacts are provided by arginine 156 and arginine 167. An ATP-binding site is contributed by glycine 203.

It belongs to the adenylate kinase family. As to quaternary structure, monomer.

The protein resides in the cytoplasm. The enzyme catalyses AMP + ATP = 2 ADP. It participates in purine metabolism; AMP biosynthesis via salvage pathway; AMP from ADP: step 1/1. Its function is as follows. Catalyzes the reversible transfer of the terminal phosphate group between ATP and AMP. Plays an important role in cellular energy homeostasis and in adenine nucleotide metabolism. The sequence is that of Adenylate kinase from Bordetella bronchiseptica (strain ATCC BAA-588 / NCTC 13252 / RB50) (Alcaligenes bronchisepticus).